The primary structure comprises 184 residues: uncharacterized protein (184 aa).

The N-terminal stretch at 1–20 (MKKQILALVCGVIFSSSTWA) is a signal peptide.

The protein to E.coli YtfJ.

The protein resides in the periplasm. This is an uncharacterized protein from Haemophilus influenzae (strain ATCC 51907 / DSM 11121 / KW20 / Rd).